We begin with the raw amino-acid sequence, 403 residues long: Coiled-coil domain-containing glutamate-rich protein 1 (403 aa).

The segment covering 1 to 11 (MTQTVNEREDP) has biased composition (basic and acidic residues). Disordered regions lie at residues 1 to 23 (MTQT…ASSI), 51 to 70 (IEYE…GSWF), 134 to 164 (RPPG…PPID), 202 to 241 (QQEK…VEED), and 261 to 350 (PALM…GEQR). Over residues 137–157 (GRKKRWGRRGRGLRRHPRRSF) the composition is skewed to basic residues. The segment covering 209–220 (QQAALRAQQAQE) has biased composition (low complexity). Positions 261 to 271 (PALMQHNQSPT) are enriched in polar residues. Residues 275–346 (VEEEEKNVDD…YMLEETGLEE (72 aa)) show a composition bias toward acidic residues. Positions 292 to 353 (CDEKEESEEE…LEEGEQRAEE (62 aa)) form a coiled coil.

In terms of tissue distribution, expressed in testis.

It is found in the nucleus. Functionally, regulator of histone epigenetic modifications and chromatin compaction into the sperm head, required for histone-to-protamine (HTP) transition. HTP is a key event in which somatic histones are first replaced by testis-specific histone variants, then transition proteins (TNPs) are incorporated into the spermatid nucleus, and finally protamines (PRMs) replace the TNPs to promote chromatin condensation. The polypeptide is Coiled-coil domain-containing glutamate-rich protein 1 (Ccer1) (Mus musculus (Mouse)).